The chain runs to 1396 residues: DNA-directed RNA polymerase subunit beta' (1396 aa).

Cys72, Cys74, Cys87, and Cys90 together coordinate Zn(2+). Mg(2+)-binding residues include Asp463, Asp465, and Asp467. Zn(2+)-binding residues include Cys814, Cys889, Cys896, and Cys899.

Belongs to the RNA polymerase beta' chain family. As to quaternary structure, the RNAP catalytic core consists of 2 alpha, 1 beta, 1 beta' and 1 omega subunit. When a sigma factor is associated with the core the holoenzyme is formed, which can initiate transcription. The cofactor is Mg(2+). Zn(2+) is required as a cofactor.

The enzyme catalyses RNA(n) + a ribonucleoside 5'-triphosphate = RNA(n+1) + diphosphate. DNA-dependent RNA polymerase catalyzes the transcription of DNA into RNA using the four ribonucleoside triphosphates as substrates. The protein is DNA-directed RNA polymerase subunit beta' of Chlamydia trachomatis serovar L2 (strain ATCC VR-902B / DSM 19102 / 434/Bu).